We begin with the raw amino-acid sequence, 456 residues long: MTSSYSSSSCPLGCTMAPGARNVSVSPIDIGCQPGAEANIAPMCLLANVAHANRVRVGSTPLGRPSLCLPPTCHTACPLPGTCHIPGNIGICGAYGENTLNGHEKETMQFLNDRLANYLEKVRQLEQENAELEATLLERSKCHESTVCPDYQSYFHTIEELQQKILCSKAENARLIVQIDNAKLAADDFRIKLESERSLRQLVEADKCGTQKLLDDATLAKADLEAQQESLKEEQLSLKSNHEQEVKILRSQLGEKLRIELDIEPTIDLNRVLGEMRAQYEAMLETNRQDVEQWFQAQSEGISLQDMSCSEELQCCQSEILELRCTVNALEVERQAQHTLKDCLQNSLCEAEDRFGTELAQMQSLISNVEEQLSEIRADLERQNQEYQVLLDVKTRLENEIATYRNLLESEDCKLPCNPCSTSPSCVTAPCAPRPSCGPCTTCGPTCGASTTGSRF.

Residues 1-104 (MTSSYSSSSC…YGENTLNGHE (104 aa)) are head. An IF rod domain is found at 104–415 (EKETMQFLND…NLLESEDCKL (312 aa)). The segment at 105–139 (KETMQFLNDRLANYLEKVRQLEQENAELEATLLER) is coil 1A. The tract at residues 140-150 (SKCHESTVCPD) is linker 1. A coil 1B region spans residues 151–251 (YQSYFHTIEE…HEQEVKILRS (101 aa)). Residues 252-267 (QLGEKLRIELDIEPTI) are linker 12. A coil 2 region spans residues 268 to 411 (DLNRVLGEMR…ATYRNLLESE (144 aa)). Positions 412 to 456 (DCKLPCNPCSTSPSCVTAPCAPRPSCGPCTTCGPTCGASTTGSRF) are tail.

It belongs to the intermediate filament family.

The chain is Keratin, type I cuticular Ha8 (KRT38) from Homo sapiens (Human).